The primary structure comprises 221 residues: Thymine/uracil-DNA glycosylase (221 aa).

One can recognise a HhH domain in the interval 105-133 (DYGGRVPRNRKAILDLPGVGKYTCAAVMC). [4Fe-4S] cluster is bound by residues Cys-197, Cys-204, Cys-207, and Cys-213.

It belongs to the Nth/MutY family. The cofactor is [4Fe-4S] cluster.

The catalysed reaction is Hydrolyzes mismatched double-stranded DNA and polynucleotides, releasing free thymine.. DNA glycosylase that excises thymine from T/G mismatches and uracil from U/G mismatches. Acts as a repair enzyme able to counteract the mutagenic effect of spontaneous hydrolytic deamination of DNA 5-methylcytosine (5-meC) residues that leads to the formation of T/G mismatches. May also repair U/G mismatches arising from hydrolytic deamination of DNA cytosine residues. G/G, A/G, T/C and U/C are minor substrates. This is Thymine/uracil-DNA glycosylase from Methanothermobacter thermautotrophicus (Methanobacterium thermoformicicum).